Reading from the N-terminus, the 193-residue chain is HMG-Y-related protein A (193 aa).

In terms of domain architecture, H15 spans 11 to 81 (PIPPYPEMIL…LKNNYFRAGA (71 aa)). A disordered region spans residues 75-193 (NYFRAGAPDA…PAVPSETAAA (119 aa)). The Nuclear localization signal 1 (NLS) signature appears at 86 to 92 (PKRGRGR). DNA-binding regions (a.T hook) lie at residues 87–98 (KRGRGRPPKARD), 113–124 (GRGRGRPPKAKS), 138–149 (PKPRGRPPKKAK), and 173–184 (KRGRGRPPKVRP). Residues 145–149 (PKKAK) carry the Nuclear localization signal 2 (NLS) motif.

Belongs to the histone H1/H5 family. In terms of processing, phosphorylated by CDK, this phosphorylation prevents DNA-binding. Motility is increased when hypophosphorylated. Post-translationally, acetylated.

The protein resides in the nucleus. Its subcellular location is the nucleolus. Binds A/T-rich DNA (e.g. present in the storage gamma-zein gene promoter) with a highly dynamic distribution into the nucleus. Probably involved in endosperm development, during cells shift from a mitotic cycle to endoreduplication leading to massive synthesis of storage proteins (zeins) and starch. The polypeptide is HMG-Y-related protein A (Zea mays (Maize)).